A 150-amino-acid chain; its full sequence is Leukotriene C4 synthase (150 aa).

At 1-6 (MKDEVA) the chain is on the cytoplasmic side. The chain crosses the membrane as a helical span at residues 7 to 27 (LLASVTLLGVLLQAYFSLQVI). Residues 28-48 (SARRAFRVSPPLTTGPPEFER) lie on the Lumenal side of the membrane. A glutathione-binding site is contributed by R30. R31 serves as the catalytic Proton donor. S36 is modified (phosphoserine). The helical transmembrane segment at 49–69 (IYRAQVNCSEYFPLFLAMLWV) threads the bilayer. Glutathione is bound by residues 51–55 (RAQVN) and 58–59 (EY). At 70–73 (AGIF) the chain is on the cytoplasmic side. Residues 74 to 94 (FHEGAAALCGLVYLFARLRYF) form a helical membrane-spanning segment. 93-97 (YFQGY) provides a ligand contact to glutathione. Topologically, residues 95–104 (QGYARSAQQR) are lumenal. R104 acts as the Proton acceptor in catalysis. Residues 105 to 124 (LAPLYASARALWLLVALAAL) traverse the membrane as a helical segment. The Cytoplasmic segment spans residues 125–150 (GLLAHFLPAELRAALLGQLRKLLLRS).

It belongs to the MAPEG family. As to quaternary structure, homotrimer. Interacts with ALOX5AP and ALOX5. In terms of processing, phosphorylation at Ser-36 by RPS6KB1 inhibits the leukotriene-C4 synthase activity.

It localises to the nucleus outer membrane. Its subcellular location is the endoplasmic reticulum membrane. The protein localises to the nucleus membrane. It catalyses the reaction leukotriene C4 = leukotriene A4 + glutathione. The enzyme catalyses (13S,14S)-epoxy-(4Z,7Z,9E,11E,16Z,19Z)-docosahexaenoate + glutathione = (13R)-S-glutathionyl-(14S)-hydroxy-(4Z,7Z,9E,11E,16Z,19Z)-docosahexaenoate. It functions in the pathway lipid metabolism; leukotriene C4 biosynthesis. Its activity is regulated as follows. Inhibited by MK886. Catalyzes the conjugation of leukotriene A4 with reduced glutathione (GSH) to form leukotriene C4 with high specificity. Can also catalyze the transfer of a glutathionyl group from glutathione (GSH) to 13(S),14(S)-epoxy-docosahexaenoic acid to form maresin conjugate in tissue regeneration 1 (MCTR1), a bioactive lipid mediator that possess potent anti-inflammatory and proresolving actions. The protein is Leukotriene C4 synthase (LTC4S) of Bos taurus (Bovine).